The sequence spans 107 residues: uncharacterized protein (107 aa).

A signal peptide spans 1 to 34 (MRLQWPKFITFLSTGSCCLLFLLLPCSFFPLPTA).

This is an uncharacterized protein from Saccharomyces cerevisiae (strain ATCC 204508 / S288c) (Baker's yeast).